A 388-amino-acid polypeptide reads, in one-letter code: (S)-8-oxocitronellyl enol synthase ISY1 (388 aa).

NADP(+)-binding positions include 35-37 (TGI), 63-64 (RR), 81-82 (DV), 105-106 (TW), and glutamine 143. Catalysis depends on residues lysine 147 and tyrosine 178. Residues tyrosine 178, isoleucine 205, and 212 to 214 (SMM) each bind NADP(+).

It belongs to the short-chain dehydrogenases/reductases (SDR) family.

It carries out the reaction (S)-8-oxocitronellyl enol + NADP(+) = (6E)-8-oxogeranial + NADPH + H(+). It catalyses the reaction (S)-8-oxocitronellyl enol + NAD(+) = (6E)-8-oxogeranial + NADH + H(+). Functionally, iridoid synthase that catalyzes the first step in generation of the iridoid ring scaffold using the linear monoterpene (6E)-8-oxogeranial as substrate. Iridoids comprise a large family of distinctive bicyclic monoterpenes that possess a wide range of pharmacological activities, including anticancer, anti-inflammatory, antifungal and antibacterial activities. Catalyzes the conversion of the linear monoterpene (6E)-8-oxogeranial to (S)-8-oxocitronellyl enol, a precursor of nepetalactones, which are metabolites that are both insect-repellent and have euphoric effect in cats. The chain is (S)-8-oxocitronellyl enol synthase ISY1 from Nepeta cataria (Catnip).